We begin with the raw amino-acid sequence, 229 residues long: 4-hydroxy-tetrahydrodipicolinate reductase (229 aa).

NAD(+) contacts are provided by residues 10 to 15 (GSAGRM), 78 to 80 (GTT), and 102 to 105 (SSNM). The Proton donor/acceptor role is filled by histidine 133. Position 134 (histidine 134) interacts with (S)-2,3,4,5-tetrahydrodipicolinate. Catalysis depends on lysine 137, which acts as the Proton donor. 143-144 (GT) is a (S)-2,3,4,5-tetrahydrodipicolinate binding site.

This sequence belongs to the DapB family.

It is found in the cytoplasm. The enzyme catalyses (S)-2,3,4,5-tetrahydrodipicolinate + NAD(+) + H2O = (2S,4S)-4-hydroxy-2,3,4,5-tetrahydrodipicolinate + NADH + H(+). The catalysed reaction is (S)-2,3,4,5-tetrahydrodipicolinate + NADP(+) + H2O = (2S,4S)-4-hydroxy-2,3,4,5-tetrahydrodipicolinate + NADPH + H(+). It functions in the pathway amino-acid biosynthesis; L-lysine biosynthesis via DAP pathway; (S)-tetrahydrodipicolinate from L-aspartate: step 4/4. In terms of biological role, catalyzes the conversion of 4-hydroxy-tetrahydrodipicolinate (HTPA) to tetrahydrodipicolinate. This chain is 4-hydroxy-tetrahydrodipicolinate reductase, found in Bdellovibrio bacteriovorus (strain ATCC 15356 / DSM 50701 / NCIMB 9529 / HD100).